The primary structure comprises 256 residues: Thiazole synthase (256 aa).

Lys-98 (schiff-base intermediate with DXP) is an active-site residue. Residues Gly-159, 185 to 186, and 207 to 208 each bind 1-deoxy-D-xylulose 5-phosphate; these read AG and NT.

It belongs to the ThiG family. Homotetramer. Forms heterodimers with either ThiH or ThiS.

The protein resides in the cytoplasm. It catalyses the reaction [ThiS sulfur-carrier protein]-C-terminal-Gly-aminoethanethioate + 2-iminoacetate + 1-deoxy-D-xylulose 5-phosphate = [ThiS sulfur-carrier protein]-C-terminal Gly-Gly + 2-[(2R,5Z)-2-carboxy-4-methylthiazol-5(2H)-ylidene]ethyl phosphate + 2 H2O + H(+). It functions in the pathway cofactor biosynthesis; thiamine diphosphate biosynthesis. Its function is as follows. Catalyzes the rearrangement of 1-deoxy-D-xylulose 5-phosphate (DXP) to produce the thiazole phosphate moiety of thiamine. Sulfur is provided by the thiocarboxylate moiety of the carrier protein ThiS. In vitro, sulfur can be provided by H(2)S. The chain is Thiazole synthase from Aliivibrio fischeri (strain MJ11) (Vibrio fischeri).